Reading from the N-terminus, the 300-residue chain is Kynurenine formamidase (300 aa).

An HGGXW motif is present at residues 86 to 90 (HGGYW). Ser-157 serves as the catalytic Nucleophile. Catalysis depends on residues Asp-244 and His-276.

The protein belongs to the kynurenine formamidase family. In terms of assembly, homodimer.

It catalyses the reaction N-formyl-L-kynurenine + H2O = L-kynurenine + formate + H(+). It functions in the pathway amino-acid degradation; L-tryptophan degradation via kynurenine pathway; L-kynurenine from L-tryptophan: step 2/2. Catalyzes the hydrolysis of N-formyl-L-kynurenine to L-kynurenine, the second step in the kynurenine pathway of tryptophan degradation. Required for elimination of toxic metabolites. This chain is Kynurenine formamidase (KFase), found in Drosophila melanogaster (Fruit fly).